The following is a 375-amino-acid chain: Alanine racemase, catabolic (375 aa).

The active-site Proton acceptor; specific for D-alanine is K38. K38 is modified (N6-(pyridoxal phosphate)lysine). The active-site Proton acceptor; specific for L-alanine is Y269.

This sequence belongs to the alanine racemase family. The cofactor is pyridoxal 5'-phosphate.

The enzyme catalyses L-alanine = D-alanine. It participates in amino-acid biosynthesis; D-alanine biosynthesis; D-alanine from L-alanine: step 1/1. This is Alanine racemase, catabolic (alr1) from Schizosaccharomyces pombe (strain 972 / ATCC 24843) (Fission yeast).